The sequence spans 199 residues: Thymidine kinase (199 aa).

Residues 15 to 22 (GSMFSGKS) and 88 to 91 (DEVQ) each bind ATP. Catalysis depends on Glu-89, which acts as the Proton acceptor. Zn(2+) is bound by residues Cys-145, Cys-148, Cys-183, and His-186.

This sequence belongs to the thymidine kinase family. As to quaternary structure, homotetramer.

It localises to the cytoplasm. It carries out the reaction thymidine + ATP = dTMP + ADP + H(+). The protein is Thymidine kinase of Staphylococcus saprophyticus subsp. saprophyticus (strain ATCC 15305 / DSM 20229 / NCIMB 8711 / NCTC 7292 / S-41).